The primary structure comprises 453 residues: Beta-agarase AgaB34 (453 aa).

The signal sequence occupies residues 1 to 23; it reads MKGFTKHSILMACSIGLAINATA. Residues 24–301 form the GH16 domain; sequence ADWDNIPIPA…WIRVYKPTGG (278 aa). The active-site Nucleophile is the glutamate 147. The active-site Proton donor is the glutamate 152. A Ricin B-type lectin domain is found at 313–453; the sequence is PSGYTNLQLA…GATNQRFKFL (141 aa). Intrachain disulfides connect cysteine 327-cysteine 346, cysteine 375-cysteine 394, and cysteine 423-cysteine 442.

This sequence belongs to the glycosyl hydrolase 16 family.

The protein resides in the secreted. The catalysed reaction is Hydrolysis of (1-&gt;4)-beta-D-galactosidic linkages in agarose, giving the tetramer as the predominant product.. This chain is Beta-agarase AgaB34, found in Agarivorans albus.